Here is a 119-residue protein sequence, read N- to C-terminus: Ribonuclease P protein component (119 aa).

This sequence belongs to the RnpA family. As to quaternary structure, consists of a catalytic RNA component (M1 or rnpB) and a protein subunit.

It carries out the reaction Endonucleolytic cleavage of RNA, removing 5'-extranucleotides from tRNA precursor.. Its function is as follows. RNaseP catalyzes the removal of the 5'-leader sequence from pre-tRNA to produce the mature 5'-terminus. It can also cleave other RNA substrates such as 4.5S RNA. The protein component plays an auxiliary but essential role in vivo by binding to the 5'-leader sequence and broadening the substrate specificity of the ribozyme. The protein is Ribonuclease P protein component of Yersinia enterocolitica serotype O:8 / biotype 1B (strain NCTC 13174 / 8081).